We begin with the raw amino-acid sequence, 152 residues long: Large ribosomal subunit protein uL15 (152 aa).

The disordered stretch occupies residues 1–66 (MLQLHTIKPN…PLHRRLPKKG (66 aa)). Residues 24 to 36 (ESSGLGKTCGKGN) are compositionally biased toward gly residues.

It belongs to the universal ribosomal protein uL15 family. As to quaternary structure, part of the 50S ribosomal subunit.

Its function is as follows. Binds to the 23S rRNA. This is Large ribosomal subunit protein uL15 from Akkermansia muciniphila (strain ATCC BAA-835 / DSM 22959 / JCM 33894 / BCRC 81048 / CCUG 64013 / CIP 107961 / Muc).